We begin with the raw amino-acid sequence, 1132 residues long: Telomerase reverse transcriptase (1132 aa).

The tract at residues 1–230 (MPRAPRCRAV…ARRRGGSASR (230 aa)) is RNA-interacting domain 1. A GQ motif region spans residues 58–197 (VPWDARPPPA…PHASGPRRRL (140 aa)). Residues 137–141 (WGLLL) are required for regulating specificity for telomeric DNA and for processivity for primer elongation. A disordered region spans residues 210–320 (AGVPLGLPAP…SRPPRPWDTP (111 aa)). The segment covering 213-234 (PLGLPAPGARRRGGSASRSLPL) has biased composition (low complexity). The Bipartite nuclear localization signal signature appears at 222–240 (RRRGGSASRSLPLPKRPRR). Phosphoserine; by PKB/AKT1 is present on serine 227. The segment at 231–324 (SLPLPKRPRR…RPWDTPCPPV (94 aa)) is linker. Residues 293–304 (RHSHPSVGRQHH) show a composition bias toward basic residues. Positions 301–538 (RQHHAGPPST…VPAAEHRLRE (238 aa)) are required for oligomerization. The segment covering 310-320 (TSRPPRPWDTP) has biased composition (pro residues). Positions 325–550 (YAETKHFLYS…LAKFLHWLMS (226 aa)) are RNA-interacting domain 2. The TFLY; involved in RNA binding motif lies at 328-333 (TKHFLY). A QFP motif region spans residues 376 to 521 (PRRLPRLPQR…MSVRDCAWLR (146 aa)). A CP motif region spans residues 397-417 (LGNHAQCPYGVLLKTHCPLRA). Serine 457 carries the phosphoserine; by DYRK2 modification. The Reverse transcriptase domain occupies 605–935 (EVRQHREARP…GLFPWCGLLL (331 aa)). Tyrosine 707 is subject to Phosphotyrosine; by SRC-type Tyr-kinases. Aspartate 712, aspartate 868, and aspartate 869 together coordinate Mg(2+). Positions 914–928 (LGGTAFVQMPAHGLF) are required for oligomerization. Positions 930–934 (WCGLL) are primer grip sequence. Residues 936–1132 (DTRTLEVQSD…LPSDFKTILD (197 aa)) are CTE.

Belongs to the reverse transcriptase family. Telomerase subfamily. As to quaternary structure, catalytic component of the telomerase holoenzyme complex composed of one molecule of TERT, one molecule of WRAP53/TCAB1, two molecules of H/ACA ribonucleoprotein complex subunits DKC1, NOP10, NHP2 and GAR1, and a telomerase RNA template component (TERC). The telomerase holoenzyme complex is associated with TEP1, SMG6/EST1A and POT1. The molecular chaperone HSP90/P23 complex is required for correct assembly and stabilization of the active telomerase. Interacts directly with HSP90A and PTGES3. Interacts with HSPA1A; the interaction occurs in the absence of TERC and dissociates once the complex has formed. Interacts with RAN; the interaction promotes nuclear export of TERT. Interacts with XPO1. Interacts with PTPN11; the interaction retains TERT in the nucleus. Interacts with NCL (via RRM1 and C-terminal RRM4/Arg/Gly-rich domains); the interaction is important for nucleolar localization of TERT. Interacts with SMARCA4 (via the bromodomain); the interaction regulates Wnt-mediated signaling. Interacts with MCRS1 (isoform MCRS2); the interaction inhibits in vitro telomerase activity. Interacts with PIF1; the interaction has no effect on the elongation activity of TERT. Interacts with PML; the interaction recruits TERT to PML bodies and inhibits telomerase activity. Interacts with GNL3L. Interacts with isoform 1 and isoform 2 of NVL. Interacts with DHX36. Interacts with ATF7. Phosphorylation at Tyr-707 under oxidative stress leads to translocation of TERT to the cytoplasm and reduces its antiapoptotic activity. Dephosphorylated by SHP2/PTPN11 leading to nuclear retention. Phosphorylation at Ser-227 by the AKT pathway promotes nuclear location. Phosphorylation at the G2/M phase at Ser-457 by DYRK2 promotes ubiquitination by the EDVP complex and degradation. Post-translationally, ubiquitinated by the EDVP complex, a E3 ligase complex following phosphorylation at Ser-457 by DYRK2. Ubiquitinated leads to proteasomal degradation. In terms of processing, (Microbial infection) In case of infection by HIV-1, the EDVP complex is hijacked by HIV-1 via interaction between HIV-1 Vpr and DCAF1/VPRBP, leading to ubiquitination and degradation. As to expression, expressed at a high level in thymocyte subpopulations, at an intermediate level in tonsil T-lymphocytes, and at a low to undetectable level in peripheral blood T-lymphocytes.

The protein localises to the nucleus. It localises to the nucleolus. It is found in the nucleoplasm. Its subcellular location is the chromosome. The protein resides in the telomere. The protein localises to the cytoplasm. It localises to the PML body. The catalysed reaction is DNA(n) + a 2'-deoxyribonucleoside 5'-triphosphate = DNA(n+1) + diphosphate. Its function is as follows. Telomerase is a ribonucleoprotein enzyme essential for the replication of chromosome termini in most eukaryotes. Active in progenitor and cancer cells. Inactive, or very low activity, in normal somatic cells. Catalytic component of the teleromerase holoenzyme complex whose main activity is the elongation of telomeres by acting as a reverse transcriptase that adds simple sequence repeats to chromosome ends by copying a template sequence within the RNA component of the enzyme. Catalyzes the RNA-dependent extension of 3'-chromosomal termini with the 6-nucleotide telomeric repeat unit, 5'-TTAGGG-3'. The catalytic cycle involves primer binding, primer extension and release of product once the template boundary has been reached or nascent product translocation followed by further extension. More active on substrates containing 2 or 3 telomeric repeats. Telomerase activity is regulated by a number of factors including telomerase complex-associated proteins, chaperones and polypeptide modifiers. Modulates Wnt signaling. Plays important roles in aging and antiapoptosis. The chain is Telomerase reverse transcriptase (TERT) from Homo sapiens (Human).